Here is a 499-residue protein sequence, read N- to C-terminus: MKPYGKIPDNSIKSLQDLMQLLKKSKDFITLEIASNNSSIVISYFRTLIDVNIFHEEVLTYIKEKSFNSLQDIHSVLPFENSKITNQIEDIQDSILNGYILIQYDTDKLNCLLVNVSKKEKRDITKAEIEYNIVGPQIAFVEDLDVNLNLVRRKLPTPYLQMKELKVGSLSNTTVAIVFIEGIVNDQNLQEIIKRVSQIKTDHVLDSTYLMQLIADNPNSIFPQFLNTERPDRVAAVLAEGKIALFVDGSPYAITLPTTLIDFFSTTEDYTMPWIIASFFRLLRLFAFIFSVLTTPLYVSILTYHYELIPKELLETLIISRSKVPFPPLIEALFLEITIELLREAGARLPTKVGLTVGIVGGIVIGQASVEASLTSNVLIIIVALSALSSFTAPIYRIGNTIRVIRFPFIISAHLLGLLGIVLTSSLLLARLLRTESLRRPYLFPFYPTRPTDWKDSIIRMPISAMFRRPIFSRSKQRFRFNPEEVEKNKILSRNDFDD.

Helical transmembrane passes span 285-305, 376-396, and 409-429; these read LFAF…LTYH, SNVL…APIY, and FIIS…SLLL.

Belongs to the GerABKA family.

It is found in the membrane. Its function is as follows. Required for the germination response to inosine. Has no role in L-alanine germination. The polypeptide is Spore germination protein GerQA (gerQA) (Bacillus cereus).